A 202-amino-acid chain; its full sequence is Glycerol-3-phosphate acyltransferase (202 aa).

6 helical membrane passes run 2–22, 51–71, 80–100, 116–136, 137–157, and 158–178; these read INLL…AVVV, KAAI…VLLA, VDET…LFPL, ILFA…LIIA, FFFR…PFFY, and VLMN…VLLI.

The protein belongs to the PlsY family. Probably interacts with PlsX.

It localises to the cell inner membrane. The catalysed reaction is an acyl phosphate + sn-glycerol 3-phosphate = a 1-acyl-sn-glycero-3-phosphate + phosphate. It functions in the pathway lipid metabolism; phospholipid metabolism. Functionally, catalyzes the transfer of an acyl group from acyl-phosphate (acyl-PO(4)) to glycerol-3-phosphate (G3P) to form lysophosphatidic acid (LPA). This enzyme utilizes acyl-phosphate as fatty acyl donor, but not acyl-CoA or acyl-ACP. The protein is Glycerol-3-phosphate acyltransferase of Cupriavidus metallidurans (strain ATCC 43123 / DSM 2839 / NBRC 102507 / CH34) (Ralstonia metallidurans).